Here is a 273-residue protein sequence, read N- to C-terminus: Undecaprenyl-diphosphatase (273 aa).

The next 7 helical transmembrane spans lie at 6–26 (SLLI…LPVS), 45–65 (AKTF…VMFW), 90–110 (LTLI…LVFH), 116–136 (LFNP…LIAA), 190–210 (YAAS…ATVL), 222–242 (ADIP…LIAI), and 252–272 (ISFI…YVVF).

The protein belongs to the UppP family.

Its subcellular location is the cell inner membrane. The enzyme catalyses di-trans,octa-cis-undecaprenyl diphosphate + H2O = di-trans,octa-cis-undecaprenyl phosphate + phosphate + H(+). Catalyzes the dephosphorylation of undecaprenyl diphosphate (UPP). Confers resistance to bacitracin. The chain is Undecaprenyl-diphosphatase from Salmonella arizonae (strain ATCC BAA-731 / CDC346-86 / RSK2980).